Reading from the N-terminus, the 213-residue chain is Serine protease inhibitor 5 (213 aa).

A signal peptide spans Met-1 to Thr-22. Positions Ser-23–Asn-28 are excised as a propeptide. A Vacuolar targeting signal motif is present at residues Asn-25–Pro-30. 2 cysteine pairs are disulfide-bonded: Cys-76-Cys-125 and Cys-174-Cys-183.

Belongs to the protease inhibitor I3 (leguminous Kunitz-type inhibitor) family.

The protein resides in the vacuole. Inhibitor of trypsin (serine protease). Protects the plant by inhibiting proteases of invading organisms. In Solanum tuberosum (Potato), this protein is Serine protease inhibitor 5.